We begin with the raw amino-acid sequence, 247 residues long: NAD(P)H-quinone oxidoreductase subunit K (247 aa).

[4Fe-4S] cluster contacts are provided by cysteine 63, cysteine 64, cysteine 128, and cysteine 159. The interval 218 to 247 is disordered; that stretch reads TRQAPPKELTEAIGMEVPPALASQKQKEEA.

It belongs to the complex I 20 kDa subunit family. In terms of assembly, NDH-1 can be composed of about 15 different subunits; different subcomplexes with different compositions have been identified which probably have different functions. Requires [4Fe-4S] cluster as cofactor.

It localises to the cellular thylakoid membrane. The catalysed reaction is a plastoquinone + NADH + (n+1) H(+)(in) = a plastoquinol + NAD(+) + n H(+)(out). It catalyses the reaction a plastoquinone + NADPH + (n+1) H(+)(in) = a plastoquinol + NADP(+) + n H(+)(out). Functionally, NDH-1 shuttles electrons from an unknown electron donor, via FMN and iron-sulfur (Fe-S) centers, to quinones in the respiratory and/or the photosynthetic chain. The immediate electron acceptor for the enzyme in this species is believed to be plastoquinone. Couples the redox reaction to proton translocation, and thus conserves the redox energy in a proton gradient. Cyanobacterial NDH-1 also plays a role in inorganic carbon-concentration. This is NAD(P)H-quinone oxidoreductase subunit K from Crocosphaera subtropica (strain ATCC 51142 / BH68) (Cyanothece sp. (strain ATCC 51142)).